A 481-amino-acid chain; its full sequence is MNQTCKVCGEPAAGFHFGAFTCEGCKSFFGRSYNNISTISECKNDGKCIIDKKNRTTCKACRLRKCYNVGMSKGGSRYGRRSNWFKIHCLLQEHEQAAAAAAGKAPGHATGSPMSSPGFGDLAAHLQQQQQQHQQQQQQQHQHQQQQQRHPHLPPLLGYTGYHLPEHFGARHPADAAAAAAALPFFSMMATPQSAFQLPPHLLFPGYHASAAAAAAADAAYRQEMYKHRQSVDSAASAESHSRYTPPTVATVPQQSQPQPAASPIDVCLGADDDVQSQHSHSHSHSQSQSPHTIHTPVAIRATPPQQLLPGLTTASHSSSASPTPSKSQSSSPLSFTAKMQSLSPVSVCSIGGETAAANAAASAAAAAQDGPMDLSMKTSRSSVHSFNDSDVCSLQDEHELAARRKYYQLEAECTTITNTTNSCSSSTSTSSSNSSTSSTEAAVAVKRQKLNPIGGESPPFGGFAVTHNASSAMRSIFVCV.

Positions 2–78 form a DNA-binding region, nuclear receptor; it reads NQTCKVCGEP…VGMSKGGSRY (77 aa). 2 NR C4-type zinc fingers span residues 5-25 and 42-66; these read CKVC…CEGC and CKND…LRKC. Composition is skewed to low complexity over residues 100–111, 127–148, 245–264, 316–335, and 420–440; these read AAAGKAPGHATG, QQQQ…QQQQ, TPPT…AASP, SHSS…SPLS, and TTNS…TSST. 4 disordered regions span residues 100 to 161, 231 to 294, 308 to 336, and 420 to 442; these read AAAG…GYTG, SVDS…PHTI, LLPG…PLSF, and TTNS…STEA.

This sequence belongs to the nuclear hormone receptor family. NR0 subfamily.

It localises to the nucleus. Transcriptional repressor. Binds to multiple sites in the eve stripe 3 enhancer element. Plays an essential role in the segmentation process both by refining the expression patterns of gap genes and by establishing pair-rules stripes of gene expression. The protein is Zygotic gap protein knirps (kni) of Drosophila virilis (Fruit fly).